We begin with the raw amino-acid sequence, 194 residues long: Xanthine phosphoribosyltransferase (194 aa).

Xanthine contacts are provided by Leu-20 and Asn-27. 128–132 (ANGQA) provides a ligand contact to 5-phospho-alpha-D-ribose 1-diphosphate. A xanthine-binding site is contributed by Lys-156.

This sequence belongs to the purine/pyrimidine phosphoribosyltransferase family. Xpt subfamily. In terms of assembly, homodimer.

It is found in the cytoplasm. The enzyme catalyses XMP + diphosphate = xanthine + 5-phospho-alpha-D-ribose 1-diphosphate. The protein operates within purine metabolism; XMP biosynthesis via salvage pathway; XMP from xanthine: step 1/1. Converts the preformed base xanthine, a product of nucleic acid breakdown, to xanthosine 5'-monophosphate (XMP), so it can be reused for RNA or DNA synthesis. The chain is Xanthine phosphoribosyltransferase from Geobacillus thermodenitrificans (strain NG80-2).